A 2223-amino-acid chain; its full sequence is Protein Ycf2 (2223 aa).

1576 to 1583 (GSIGTGRS) is an ATP binding site.

This sequence belongs to the Ycf2 family.

It localises to the plastid. The protein resides in the chloroplast stroma. In terms of biological role, probable ATPase of unknown function. Its presence in a non-photosynthetic plant (Epifagus virginiana) and experiments in tobacco indicate that it has an essential function which is probably not related to photosynthesis. The protein is Protein Ycf2 of Silene latifolia (White campion).